The chain runs to 201 residues: Histidinol dehydrogenase (201 aa).

This sequence belongs to the histidinol dehydrogenase family. Homodimer. Requires Zn(2+) as cofactor.

The enzyme catalyses L-histidinol + 2 NAD(+) + H2O = L-histidine + 2 NADH + 3 H(+). It functions in the pathway amino-acid biosynthesis; L-histidine biosynthesis; L-histidine from 5-phospho-alpha-D-ribose 1-diphosphate: step 9/9. Its function is as follows. Catalyzes the sequential NAD-dependent oxidations of L-histidinol to L-histidinaldehyde and then to L-histidine. The polypeptide is Histidinol dehydrogenase (hisD) (Buchnera aphidicola subsp. Schlechtendalia chinensis).